The chain runs to 686 residues: DNA ligase (686 aa).

NAD(+) contacts are provided by residues 33-37, 82-83, and Glu-122; these read DSVYD and SL. Lys-124 (N6-AMP-lysine intermediate) is an active-site residue. NAD(+) is bound by residues Arg-145, Glu-182, Lys-300, and Lys-324. The Zn(2+) site is built by Cys-418, Cys-421, Cys-436, and Cys-441. Positions 600–686 constitute a BRCT domain; sequence AVSQILAGKK…PTVESGDLHP (87 aa).

Belongs to the NAD-dependent DNA ligase family. LigA subfamily. The cofactor is Mg(2+). Requires Mn(2+) as cofactor.

It carries out the reaction NAD(+) + (deoxyribonucleotide)n-3'-hydroxyl + 5'-phospho-(deoxyribonucleotide)m = (deoxyribonucleotide)n+m + AMP + beta-nicotinamide D-nucleotide.. DNA ligase that catalyzes the formation of phosphodiester linkages between 5'-phosphoryl and 3'-hydroxyl groups in double-stranded DNA using NAD as a coenzyme and as the energy source for the reaction. It is essential for DNA replication and repair of damaged DNA. The chain is DNA ligase from Synechococcus sp. (strain JA-2-3B'a(2-13)) (Cyanobacteria bacterium Yellowstone B-Prime).